Consider the following 505-residue polypeptide: N-succinylglutamate 5-semialdehyde dehydrogenase (505 aa).

234-239 is an NAD(+) binding site; it reads GSAHTG. Residues Glu-257 and Cys-291 contribute to the active site.

Belongs to the aldehyde dehydrogenase family. AstD subfamily.

It catalyses the reaction N-succinyl-L-glutamate 5-semialdehyde + NAD(+) + H2O = N-succinyl-L-glutamate + NADH + 2 H(+). It participates in amino-acid degradation; L-arginine degradation via AST pathway; L-glutamate and succinate from L-arginine: step 4/5. In terms of biological role, catalyzes the NAD-dependent reduction of succinylglutamate semialdehyde into succinylglutamate. This Yersinia pestis (strain Pestoides F) protein is N-succinylglutamate 5-semialdehyde dehydrogenase.